We begin with the raw amino-acid sequence, 559 residues long: (-)-drimenol synthase (559 aa).

Mg(2+) is bound by residues Asp311, Asp315, Asp456, Ser460, and Glu464. Residues 311–315 (DDIYD) carry the DDXXD motif motif.

This sequence belongs to the terpene synthase family. The cofactor is Mg(2+).

The catalysed reaction is (2E,6E)-farnesyl diphosphate + H2O = (5S,9S,10S)-drim-7-en-11-ol + diphosphate. The protein operates within secondary metabolite biosynthesis; terpenoid biosynthesis. Its function is as follows. Catalyzes the conversion of (2E,6E)-farnesyl diphosphate (FPP) into drimenol, a precursor of the sesquiterpenoid polygodial. Polygodial has been shown to be an antifeedant for a number of herbivorous insects. This Persicaria hydropiper (Marshpepper knotweed) protein is (-)-drimenol synthase.